The primary structure comprises 1056 residues: Carbamoyl phosphate synthase large chain (1056 aa).

The tract at residues 1-397 is carboxyphosphate synthetic domain; the sequence is MPKKSHIKKV…AFKKALRSLD (397 aa). Positions 127, 167, 173, 174, 206, 208, 213, 239, 240, 241, 282, and 294 each coordinate ATP. Positions 131–323 constitute an ATP-grasp 1 domain; the sequence is RDLMNAIGEP…IARVAAKIAI (193 aa). Gln-282, Glu-294, and Asn-296 together coordinate Mg(2+). Residues Gln-282, Glu-294, and Asn-296 each coordinate Mn(2+). Residues 398–530 form an oligomerization domain region; it reads NDMQQHTNPS…YSTWEEGCEL (133 aa). Residues 531–920 are carbamoyl phosphate synthetic domain; sequence VRDSAKKVLI…YKACTAADNT (390 aa). The ATP-grasp 2 domain occupies 662 to 853; sequence SRLLTRLEIP…LAKIAAKVMV (192 aa). 10 residues coordinate ATP: Arg-698, Ser-737, Leu-739, Glu-744, Gly-769, Val-770, His-771, Ser-772, Gln-812, and Glu-824. Mg(2+) contacts are provided by Gln-812, Glu-824, and Asn-826. Mn(2+)-binding residues include Gln-812, Glu-824, and Asn-826. The MGS-like domain occupies 919–1056; the sequence is NTLPTTGNVF…EPLGHYHGLM (138 aa). The tract at residues 921 to 1056 is allosteric domain; it reads LPTTGNVFIS…EPLGHYHGLM (136 aa).

Belongs to the CarB family. Composed of two chains; the small (or glutamine) chain promotes the hydrolysis of glutamine to ammonia, which is used by the large (or ammonia) chain to synthesize carbamoyl phosphate. Tetramer of heterodimers (alpha,beta)4. Requires Mg(2+) as cofactor. The cofactor is Mn(2+).

The catalysed reaction is hydrogencarbonate + L-glutamine + 2 ATP + H2O = carbamoyl phosphate + L-glutamate + 2 ADP + phosphate + 2 H(+). The enzyme catalyses hydrogencarbonate + NH4(+) + 2 ATP = carbamoyl phosphate + 2 ADP + phosphate + 2 H(+). It functions in the pathway amino-acid biosynthesis; L-arginine biosynthesis; carbamoyl phosphate from bicarbonate: step 1/1. It participates in pyrimidine metabolism; UMP biosynthesis via de novo pathway; (S)-dihydroorotate from bicarbonate: step 1/3. Functionally, large subunit of the glutamine-dependent carbamoyl phosphate synthetase (CPSase). CPSase catalyzes the formation of carbamoyl phosphate from the ammonia moiety of glutamine, carbonate, and phosphate donated by ATP, constituting the first step of 2 biosynthetic pathways, one leading to arginine and/or urea and the other to pyrimidine nucleotides. The large subunit (synthetase) binds the substrates ammonia (free or transferred from glutamine from the small subunit), hydrogencarbonate and ATP and carries out an ATP-coupled ligase reaction, activating hydrogencarbonate by forming carboxy phosphate which reacts with ammonia to form carbamoyl phosphate. In Methanoculleus marisnigri (strain ATCC 35101 / DSM 1498 / JR1), this protein is Carbamoyl phosphate synthase large chain.